Consider the following 51-residue polypeptide: Large ribosomal subunit protein eL39 (51 aa).

It belongs to the eukaryotic ribosomal protein eL39 family.

This chain is Large ribosomal subunit protein eL39, found in Sulfurisphaera tokodaii (strain DSM 16993 / JCM 10545 / NBRC 100140 / 7) (Sulfolobus tokodaii).